Reading from the N-terminus, the 667-residue chain is E3 ubiquitin-protein ligase Midline-1 (667 aa).

The segment at 10 to 60 adopts an RING-type zinc-finger fold; the sequence is CPICLELFEDPLLLPCAHSLCFNCAHRILVSHCATNEPVESINAFQCPTCR. Ser92 and Ser96 each carry phosphoserine. 2 B box-type zinc fingers span residues 116–165 and 172–212; these read KVLC…IEPI and GLMC…VAAL. Zn(2+) contacts are provided by Cys119, Cys122, Cys134, Cys137, Cys142, Cys145, His150, His159, Cys175, His178, Cys198, and His204. Residues 205-264 adopt a coiled-coil conformation; it reads RDHQVAALSERYDKLKQNLESNLTNLIKRNTELETLLAKLIQTCQHVEVNASRQEAKLTE. Residues 320–379 enclose the COS domain; it reads LKENDHARFLQTAKNITERVSMATASSQVLIPEINLNDTFDTFALDFSREKKLLECLDYL. Positions 381–484 constitute a Fibronectin type-III domain; that stretch reads APNPPTIREE…EPGKLKTNSQ (104 aa). Residues 471-485 show a composition bias toward polar residues; the sequence is SRSSEPGKLKTNSQP. Residues 471 to 524 form a disordered region; the sequence is SRSSEPGKLKTNSQPFKLDPKSAHRKLKVSHDNLTVERDESSSKKSHTPERFTS. The region spanning 482–659 is the B30.2/SPRY domain; sequence NSQPFKLDPK…IITGLPIPDH (178 aa). The span at 499–520 shows a compositional bias: basic and acidic residues; sequence VSHDNLTVERDESSSKKSHTPE. Phosphoserine is present on Ser511.

It belongs to the TRIM/RBCC family. In terms of assembly, homodimer or heterodimer with MID2. Interacts with IGBP1.

The protein resides in the cytoplasm. It localises to the cytoskeleton. It carries out the reaction S-ubiquitinyl-[E2 ubiquitin-conjugating enzyme]-L-cysteine + [acceptor protein]-L-lysine = [E2 ubiquitin-conjugating enzyme]-L-cysteine + N(6)-ubiquitinyl-[acceptor protein]-L-lysine.. Its function is as follows. Has E3 ubiquitin ligase activity towards IGBP1, promoting its monoubiquitination, which results in deprotection of the catalytic subunit of protein phosphatase PP2A, and its subsequent degradation by polyubiquitination. The protein is E3 ubiquitin-protein ligase Midline-1 (Mid1) of Rattus norvegicus (Rat).